The following is a 184-amino-acid chain: Putative serine carboxypeptidase-like 52 (184 aa).

The signal sequence occupies residues 1–22 (MRTFSPKLLLLLLLVLRHHAES). An N-linked (GlcNAc...) asparagine glycan is attached at Asn-93.

It belongs to the peptidase S10 family.

The protein resides in the secreted. This Arabidopsis thaliana (Mouse-ear cress) protein is Putative serine carboxypeptidase-like 52 (SCPL52).